A 346-amino-acid polypeptide reads, in one-letter code: Methionine import ATP-binding protein MetN 1 (346 aa).

In terms of domain architecture, ABC transporter spans 2 to 241 (IEFKQVTKTF…PQHPTTEKFV (240 aa)). Residue 38-45 (GFSGAGKS) coordinates ATP.

The protein belongs to the ABC transporter superfamily. Methionine importer (TC 3.A.1.24) family. The complex is composed of two ATP-binding proteins (MetN), two transmembrane proteins (MetI) and a solute-binding protein (MetQ).

It is found in the cell membrane. The enzyme catalyses L-methionine(out) + ATP + H2O = L-methionine(in) + ADP + phosphate + H(+). The catalysed reaction is D-methionine(out) + ATP + H2O = D-methionine(in) + ADP + phosphate + H(+). In terms of biological role, part of the ABC transporter complex MetNIQ involved in methionine import. Responsible for energy coupling to the transport system. This chain is Methionine import ATP-binding protein MetN 1, found in Shouchella clausii (strain KSM-K16) (Alkalihalobacillus clausii).